Reading from the N-terminus, the 219-residue chain is RING-H2 finger protein ATL78 (219 aa).

A helical transmembrane segment spans residues V57–I77. An RING-type; atypical zinc finger spans residues C131–R173.

It belongs to the RING-type zinc finger family. ATL subfamily.

Its subcellular location is the membrane. It catalyses the reaction S-ubiquitinyl-[E2 ubiquitin-conjugating enzyme]-L-cysteine + [acceptor protein]-L-lysine = [E2 ubiquitin-conjugating enzyme]-L-cysteine + N(6)-ubiquitinyl-[acceptor protein]-L-lysine.. The protein operates within protein modification; protein ubiquitination. The protein is RING-H2 finger protein ATL78 (ATL78) of Arabidopsis thaliana (Mouse-ear cress).